A 71-amino-acid polypeptide reads, in one-letter code: Pro-glucagon (71 aa).

The protein belongs to the glucagon family.

It localises to the secreted. In terms of biological role, plays a key role in glucose metabolism and homeostasis. Regulates blood glucose by increasing gluconeogenesis and decreasing glycolysis. The protein is Pro-glucagon (gcg) of Piaractus mesopotamicus (Small-scaled pacu).